Here is a 446-residue protein sequence, read N- to C-terminus: Probable D-serine dehydratase (446 aa).

At K116 the chain carries N6-(pyridoxal phosphate)lysine.

Belongs to the serine/threonine dehydratase family. DsdA subfamily. It depends on pyridoxal 5'-phosphate as a cofactor.

It carries out the reaction D-serine = pyruvate + NH4(+). The sequence is that of Probable D-serine dehydratase from Bacillus thuringiensis subsp. konkukian (strain 97-27).